A 277-amino-acid polypeptide reads, in one-letter code: MSVPTVLERIIARKFQEVAERSAHVSLAELEGLAKAADAPRGFANALIEQAKRKQPAVIAEIKKASPSKGVIREHFVPAEIAVSYEKGGATCLSVLTDVDYFQGADEYLQQARAAVSLPVIRKDFMVDPYQIVEARALGADCVLLIVSALDDVKMAELAATAKDVGLDVLVEVHDGDELERALKTLDTPLVGVNNRNLHTFEVSLETTLDLLPRIPRDRLAITESGILNRADVELMAINEVYSFLVGEAFMRAEQPGLELQRLFFPEQVKKTVQQLD.

Belongs to the TrpC family.

The catalysed reaction is 1-(2-carboxyphenylamino)-1-deoxy-D-ribulose 5-phosphate + H(+) = (1S,2R)-1-C-(indol-3-yl)glycerol 3-phosphate + CO2 + H2O. It participates in amino-acid biosynthesis; L-tryptophan biosynthesis; L-tryptophan from chorismate: step 4/5. The sequence is that of Indole-3-glycerol phosphate synthase from Pseudomonas putida (strain ATCC 47054 / DSM 6125 / CFBP 8728 / NCIMB 11950 / KT2440).